The following is a 476-amino-acid chain: Zinc finger CCCH domain-containing protein 6 (476 aa).

The segment covering 1–10 (MEQPHAAAAA) has biased composition (low complexity). Residues 1–57 (MEQPHAAAAAAGGGEGEGGASPDTGLEGPMWRMGLGGGGGGGGGGGGGDGDAAGRLP) form a disordered region. The segment covering 34–51 (GLGGGGGGGGGGGGGDGD) has biased composition (gly residues). 3 C3H1-type zinc fingers span residues 59–87 (RPGE…HPRD), 108–136 (RAGQ…HPKQ), and 153–181 (RLGE…HPEF). Positions 290-301 (SSTGQSSNNQQE) are enriched in polar residues. A disordered region spans residues 290-309 (SSTGQSSNNQQEHGFPERPG). 2 consecutive C3H1-type zinc fingers follow at residues 307 to 335 (RPGQ…HPRE) and 353 to 381 (RPGA…HPMG). The disordered stretch occupies residues 456–476 (TMMRAQTNTTSGGSSSPGGGR).

It is found in the nucleus. The sequence is that of Zinc finger CCCH domain-containing protein 6 from Oryza sativa subsp. japonica (Rice).